Reading from the N-terminus, the 1065-residue chain is Outer capsid protein VP3 (1065 aa).

It localises to the virion. It catalyses the reaction a 5'-end diphospho-ribonucleoside in mRNA + GTP + H(+) = a 5'-end (5'-triphosphoguanosine)-ribonucleoside in mRNA + diphosphate. It carries out the reaction a 5'-end (5'-triphosphoguanosine)-ribonucleoside in mRNA + S-adenosyl-L-methionine = a 5'-end (N(7)-methyl 5'-triphosphoguanosine)-ribonucleoside in mRNA + S-adenosyl-L-homocysteine. Functionally, outer capsid protein involved in mRNA capping. Catalyzes the last 3 enzymatic activities for formation of the 5' cap structure on the viral plus-strand transcripts, namely the RNA guanylyltransferase, RNA-7N- and RNA-2'O-methyltransferase activities. This chain is Outer capsid protein VP3 (S3), found in Cryphonectria parasitica mycoreovirus 1 (strain 9B21) (CpMYRV-1).